A 429-amino-acid chain; its full sequence is Glutamate-1-semialdehyde 2,1-aminomutase 2 (429 aa).

Lysine 268 carries the N6-(pyridoxal phosphate)lysine modification.

The protein belongs to the class-III pyridoxal-phosphate-dependent aminotransferase family. HemL subfamily. In terms of assembly, homodimer. Pyridoxal 5'-phosphate is required as a cofactor.

The protein localises to the cytoplasm. It catalyses the reaction (S)-4-amino-5-oxopentanoate = 5-aminolevulinate. It functions in the pathway porphyrin-containing compound metabolism; protoporphyrin-IX biosynthesis; 5-aminolevulinate from L-glutamyl-tRNA(Glu): step 2/2. In Bacillus velezensis (strain DSM 23117 / BGSC 10A6 / LMG 26770 / FZB42) (Bacillus amyloliquefaciens subsp. plantarum), this protein is Glutamate-1-semialdehyde 2,1-aminomutase 2.